The sequence spans 256 residues: uncharacterized protein (256 aa).

2 disordered regions span residues 1–171 (MARG…QLKH) and 185–256 (NGQR…LYND). The stretch at 14–39 (KRRSKVQEEEEHVEGSEEEVEEPEQK) forms a coiled coil. 2 stretches are compositionally biased toward acidic residues: residues 21-35 (EEEE…EVEE) and 64-92 (SDDD…DNDE). The span at 108–129 (NRGDHESHDDNSDNEEQGDRGN) shows a compositional bias: basic and acidic residues. Gly residues predominate over residues 192–205 (KRGGPPRGSFGQRG). Basic and acidic residues predominate over residues 219–234 (RQGDTRDTRDTRDTRL).

This is an uncharacterized protein from Acanthamoeba polyphaga (Amoeba).